The sequence spans 413 residues: Putative F-box protein At3g58820 (413 aa).

Residues 1–48 (MDGVSSLPNELLCHILSFLTTKEAALTSILSKRWRNLIAFVPNLYIDD) form the F-box domain.

The chain is Putative F-box protein At3g58820 from Arabidopsis thaliana (Mouse-ear cress).